The sequence spans 393 residues: MKKLLKSVLVFAALSSASSLQALPVGNPAEPSLMIDGILWEGFGGDPCDPCTTWCDAISMRMGYYGDFVFDRVLKTDVNKEFQMGDKPTSTTGNATAPTTLTARENPAYGRHMQDAEMFTNAACMALNIWDRFDVFCTLGASSGYLKGNSASFNLVGLFGDNENQSTVKTNSVPNMSLDQSVVELYTDTAFSWSVGARAALWECGCATLGASFQYAQSKPKVEELNVLCNAAEFTINKPKGYVGQEFPLALIAGTDAATGTKDASIDYHEWQASLALSYRLNMFTPYIGVKWSRASFDADTIRIAQPKSATAIFDTTTLNPTIAGAGDVKASAEGQLGDTMQIVSLQLNKMKSRKSCGIAVGTTIVDADKYAVTVETRLIDERAAHVNAQFRF.

An N-terminal signal peptide occupies residues 1–22; sequence MKKLLKSVLVFAALSSASSLQA.

Belongs to the chlamydial porin (CP) (TC 1.B.2) family. As to quaternary structure, part of a disulfide cross-linked outer membrane complex (COMC) composed of the major outer membrane porin (MOMP), the small cysteine-rich protein (OmcA) and the large cysteine-rich periplasmic protein (OmcB).

It localises to the cell outer membrane. Its function is as follows. In elementary bodies (EBs, the infectious stage, which is able to survive outside the host cell) provides the structural integrity of the outer envelope through disulfide cross-links with the small cysteine-rich protein and the large cysteine-rich periplasmic protein. It has been described in publications as the Sarkosyl-insoluble COMC (Chlamydia outer membrane complex), and serves as the functional equivalent of peptidoglycan. In terms of biological role, permits diffusion of specific solutes through the outer membrane. The protein is Major outer membrane porin, serovar E (ompA) of Chlamydia trachomatis.